Consider the following 202-residue polypeptide: Adenylate kinase (202 aa).

12-20 (GVPGVGKTT) provides a ligand contact to ATP.

This sequence belongs to the archaeal adenylate kinase family.

Its subcellular location is the cytoplasm. It carries out the reaction AMP + ATP = 2 ADP. This chain is Adenylate kinase (adkA), found in Aeropyrum pernix (strain ATCC 700893 / DSM 11879 / JCM 9820 / NBRC 100138 / K1).